A 796-amino-acid polypeptide reads, in one-letter code: MFNLIRRSAEWGGKTLVLESGKIARQASGAVMVSYAGTTVLATVVTGKTKEPVDFLPLTVQFVAKSYAVGKIPGGFLKREGKPSDRETLISRLIDRSIRPLFPAGFYDEISIVCNLLSYDTVTPPEVTALVGATAALSISGVPFNGLVVGARVGYLPSEGKYLLNASADEMLCSSLDLFLSGNEDSVLMVESEASELSESQMLGAITFGHQHCQEVINLIKEFSHESGQTPIDFIPHDISSLVSDIESSYKEDFSLAYSNTIKKERVLKLEELRGKVLSEVADKYSAGDVECSDQDIVTALKTFERSLVRSKIIDTSSRIDGRAFDEIRDIEIEVDVLPKAHGSALFTRGNTQALVVTALGTPQDEQIVDDLDGDRRENFLLHYNFPPYAVGESAALRAPGRREIGHGKLAWRAIRYVLPEKSDFPYTIRVVSEITESDGSSSMATVCGASLALMDTGVPIKSPVAGIAMGLIKEDDRFIILSDILGDEDHLGDMDFKVAGTAEGVTALQMDMKISGIDIDIIEKALLQAKDGRMHILSKMNAVIQESRNRIKNHAPRIESIFINKDKIRNVIGSGGKNIRDICEKTGAKIEIIQDGTVMIYAVNNEAVEYAKSMIMDIVTEPEIGKVFEGTVVEIMKFGAFVSFLGGKKGLVHISEIRNEHISSVGSVISLNDKVKVLVIGIDREHIQLSMRRVDQESGEPIDGELYNIRKNSFSDDSCGSTGGSSFKESYNPNSRHGSHEKKRSGGSSRSSRRNSNGPNYYREDLPSSNGFGNNNRSFSNSRNGHDVPRKPRFF.

Asp490 and Asp496 together coordinate Mg(2+). One can recognise a KH domain in the interval 557-616; that stretch reads PRIESIFINKDKIRNVIGSGGKNIRDICEKTGAKIEIIQDGTVMIYAVNNEAVEYAKSMI. The S1 motif domain occupies 626-693; sequence GKVFEGTVVE…DREHIQLSMR (68 aa). Low complexity-rich tracts occupy residues 717–728, 747–759, and 769–784; these read DDSCGSTGGSSF, GGSS…NSNG, and SSNG…SNSR. Positions 717–796 are disordered; it reads DDSCGSTGGS…HDVPRKPRFF (80 aa). Basic and acidic residues predominate over residues 785 to 796; it reads NGHDVPRKPRFF.

The protein belongs to the polyribonucleotide nucleotidyltransferase family. Mg(2+) serves as cofactor.

It is found in the cytoplasm. It catalyses the reaction RNA(n+1) + phosphate = RNA(n) + a ribonucleoside 5'-diphosphate. Functionally, involved in mRNA degradation. Catalyzes the phosphorolysis of single-stranded polyribonucleotides processively in the 3'- to 5'-direction. In Ehrlichia chaffeensis (strain ATCC CRL-10679 / Arkansas), this protein is Polyribonucleotide nucleotidyltransferase.